A 264-amino-acid chain; its full sequence is MSSLLKLHCIRPLPQRSVWLSGYKQKARCIHSSAANGDFMSWFKRKKQEEHQEPVKDTKQLIKDIEEGTNEASSQSSSNNKNRLELIPENFIGEGSRRCKRQKELKLAVSSAPFNQWLSRDKITSDNQLDDMILQATEKTLGKVDQDVQFSDLVAKFQFTKFLQSKSGYLIPDYELTTLSTPLQFKRYIKEKILPSANDPKLAYKEAEPNAIHPFSDNYASPNIYVVNDVTSKEQKSKYDTIMKEIQKLEDDATRKALETARSA.

The transit peptide at 1 to 75 directs the protein to the mitochondrion; it reads MSSLLKLHCI…EEGTNEASSQ (75 aa).

It belongs to the mitochondrion-specific ribosomal protein mL50 family. In terms of assembly, component of the mitochondrial large ribosomal subunit (mt-LSU). Mature yeast 74S mitochondrial ribosomes consist of a small (37S) and a large (54S) subunit. The 37S small subunit contains a 15S ribosomal RNA (15S mt-rRNA) and 34 different proteins. The 54S large subunit contains a 21S rRNA (21S mt-rRNA) and 46 different proteins.

The protein resides in the mitochondrion. Its function is as follows. Component of the mitochondrial ribosome (mitoribosome), a dedicated translation machinery responsible for the synthesis of mitochondrial genome-encoded proteins, including at least some of the essential transmembrane subunits of the mitochondrial respiratory chain. The mitoribosomes are attached to the mitochondrial inner membrane and translation products are cotranslationally integrated into the membrane. This chain is Large ribosomal subunit protein mL50 (MRPL13), found in Saccharomyces cerevisiae (strain ATCC 204508 / S288c) (Baker's yeast).